A 669-amino-acid polypeptide reads, in one-letter code: Exostosin-like 1 (669 aa).

Topologically, residues 1–8 (MLWRRKSF) are cytoplasmic. Residues 9–29 (WLALSAFWLLLVLLGVFPLRL) form a helical; Signal-anchor for type II membrane protein membrane-spanning segment. At 30–669 (AVLPGPLPGR…RKKYRSLEKP (640 aa)) the chain is on the lumenal side. N263 and N480 each carry an N-linked (GlcNAc...) asparagine glycan. A disulfide bridge links C577 with C627. The segment at 601–621 (RQHPEAVPMDSGDPRPVPEPQ) is disordered.

This sequence belongs to the glycosyltransferase 47 family.

It localises to the endoplasmic reticulum membrane. The enzyme catalyses 3-O-{[(1-&gt;4)-beta-D-GlcA-(1-&gt;4)-alpha-D-GlcNAc](n)-(1-&gt;4)-beta-D-GlcA-(1-&gt;3)-beta-D-Gal-(1-&gt;3)-beta-D-Gal-(1-&gt;4)-beta-D-Xyl}-L-seryl-[protein] + UDP-N-acetyl-alpha-D-glucosamine = 3-O-{alpha-D-GlcNAc-[(1-&gt;4)-beta-D-GlcA-(1-&gt;4)-alpha-D-GlcNAc](n)-(1-&gt;4)-beta-D-GlcA-(1-&gt;3)-beta-D-Gal-(1-&gt;3)-beta-D-Gal-(1-&gt;4)-beta-D-Xyl}-L-seryl-[protein] + UDP + H(+). Its pathway is protein modification; protein glycosylation. Its function is as follows. Glycosyltransferase required for the biosynthesis of heparan-sulfate (HS). Transfers N-acetyl-alpha-D-glucosamine to the nascent HS chain (GlcNAcT-II activity). Appears to lack GlcNAcT I and GlcAT-II activities. The polypeptide is Exostosin-like 1 (Extl1) (Mus musculus (Mouse)).